Reading from the N-terminus, the 638-residue chain is 1-deoxy-D-xylulose-5-phosphate synthase (638 aa).

Thiamine diphosphate is bound by residues His-79 and 120 to 122; that span reads AHS. Asp-151 contacts Mg(2+). Residues 152–153, Asn-180, Tyr-289, and Glu-371 contribute to the thiamine diphosphate site; that span reads GA. A Mg(2+)-binding site is contributed by Asn-180.

This sequence belongs to the transketolase family. DXPS subfamily. As to quaternary structure, homodimer. It depends on Mg(2+) as a cofactor. Thiamine diphosphate is required as a cofactor.

The catalysed reaction is D-glyceraldehyde 3-phosphate + pyruvate + H(+) = 1-deoxy-D-xylulose 5-phosphate + CO2. The protein operates within metabolic intermediate biosynthesis; 1-deoxy-D-xylulose 5-phosphate biosynthesis; 1-deoxy-D-xylulose 5-phosphate from D-glyceraldehyde 3-phosphate and pyruvate: step 1/1. Its function is as follows. Catalyzes the acyloin condensation reaction between C atoms 2 and 3 of pyruvate and glyceraldehyde 3-phosphate to yield 1-deoxy-D-xylulose-5-phosphate (DXP). The chain is 1-deoxy-D-xylulose-5-phosphate synthase from Rhizobium rhizogenes (strain K84 / ATCC BAA-868) (Agrobacterium radiobacter).